A 502-amino-acid polypeptide reads, in one-letter code: Zinc finger protein 3 homolog (502 aa).

Composition is skewed to basic and acidic residues over residues Met1 to Glu13 and Pro80 to Arg93. Disordered stretches follow at residues Met1–Glu26 and Leu47–Thr103. Glycyl lysine isopeptide (Lys-Gly) (interchain with G-Cter in SUMO2) cross-links involve residues Lys6 and Lys11. 13 C2H2-type zinc fingers span residues His141–His163, Phe169–His191, Phe197–His219, Tyr225–His247, Tyr253–His275, His281–His303, Tyr309–His331, Tyr337–His359, Tyr365–His387, Tyr393–His415, His421–His443, Tyr449–His471, and Tyr477–His499.

It belongs to the krueppel C2H2-type zinc-finger protein family.

The protein localises to the nucleus. In terms of biological role, may be involved in transcriptional regulation. This Homo sapiens (Human) protein is Zinc finger protein 3 homolog (ZFP3).